A 122-amino-acid chain; its full sequence is uncharacterized protein (122 aa).

The first 33 residues, 1-33, serve as a signal peptide directing secretion; sequence MASTVAGLSMSAESLRLPLLIGVSSGMLSVSDA.

This is an uncharacterized protein from Saccharomyces cerevisiae (strain ATCC 204508 / S288c) (Baker's yeast).